A 142-amino-acid chain; its full sequence is Large ribosomal subunit protein uL11 (142 aa).

In terms of assembly, part of the ribosomal stalk of the 50S ribosomal subunit. Interacts with L10 and the large rRNA to form the base of the stalk. L10 forms an elongated spine to which L12 dimers bind in a sequential fashion forming a multimeric L10(L12)X complex. Post-translationally, lys-40 is trimethylated or acetylated; other modifications may also exist.

In terms of biological role, forms part of the ribosomal stalk which helps the ribosome interact with GTP-bound translation factors. This Rhodopseudomonas palustris (strain ATCC BAA-98 / CGA009) protein is Large ribosomal subunit protein uL11.